Here is a 216-residue protein sequence, read N- to C-terminus: 3-keto-L-gulonate-6-phosphate decarboxylase UlaD (216 aa).

D11 is a binding site for substrate. Mg(2+) contacts are provided by E33 and D62. R192 contributes to the substrate binding site.

This sequence belongs to the HPS/KGPDC family. KGPDC subfamily. Homodimer. Mg(2+) is required as a cofactor.

The catalysed reaction is 3-dehydro-L-gulonate 6-phosphate + H(+) = L-xylulose 5-phosphate + CO2. It functions in the pathway cofactor degradation; L-ascorbate degradation; D-xylulose 5-phosphate from L-ascorbate: step 2/4. Catalyzes the decarboxylation of 3-keto-L-gulonate-6-P into L-xylulose-5-P. Is involved in the anaerobic L-ascorbate utilization. This chain is 3-keto-L-gulonate-6-phosphate decarboxylase UlaD, found in Escherichia coli O17:K52:H18 (strain UMN026 / ExPEC).